Reading from the N-terminus, the 377-residue chain is 23S rRNA (uracil(747)-C(5))-methyltransferase RlmC (377 aa).

[4Fe-4S] cluster-binding residues include Cys3, Cys11, Cys14, and Cys87. 4 residues coordinate S-adenosyl-L-methionine: Gln212, Phe241, Glu262, and Asn307. Cys334 functions as the Nucleophile in the catalytic mechanism.

The protein belongs to the class I-like SAM-binding methyltransferase superfamily. RNA M5U methyltransferase family. RlmC subfamily.

It catalyses the reaction uridine(747) in 23S rRNA + S-adenosyl-L-methionine = 5-methyluridine(747) in 23S rRNA + S-adenosyl-L-homocysteine + H(+). Catalyzes the formation of 5-methyl-uridine at position 747 (m5U747) in 23S rRNA. The sequence is that of 23S rRNA (uracil(747)-C(5))-methyltransferase RlmC from Proteus mirabilis (strain HI4320).